The primary structure comprises 161 residues: MMRSLAHFINKALEILCISILALMSILVFLNVVLRYGFNSGISITEEISRYLFIWLAFLGAVLAFNENQHVSVTVLVNKLPPFGQAILKFITDMMMLICCYLIIEGSWIQFQLNLNNFAPISGLPQGLTYFASVIAGILVSAILITRLISTIFFIFRGEVK.

Transmembrane regions (helical) follow at residues 13–33 (LEIL…LNVV), 51–71 (YLFI…NQHV), 86–106 (AILK…IIEG), and 135–155 (IAGI…IFFI).

It belongs to the TRAP transporter small permease family.

The protein resides in the cell inner membrane. The sequence is that of Putative TRAP transporter small permease protein HI_1030 from Haemophilus influenzae (strain ATCC 51907 / DSM 11121 / KW20 / Rd).